The following is a 494-amino-acid chain: Myocyte-specific enhancer factor 2A (494 aa).

The 55-residue stretch at 3–57 (RKKIQITRIMDERNRQVTFTKRKFGLMKKAYELSVLCDCEIALIIFNSSNKLFQY) folds into the MADS-box domain. A DNA-binding region (mef2-type) is located at residues 58-86 (ASTDMDKVLLKYTEYNEPHESRTNSDIVE). Serine 59 is modified (phosphoserine; by CK2). Phosphoserine occurs at positions 98 and 108. The span at 171–181 (TLTDSSMLSPP) shows a compositional bias: low complexity. The disordered stretch occupies residues 171–218 (TLTDSSMLSPPQTTLHRNVSPGAPQRPPSTGNAGGMLSTTDLIVPNGA). Phosphoserine is present on serine 233. A disordered region spans residues 238–268 (GATGANSLGKVMPTKSPPPPGGGNLGMNSRK). Lysine 247 carries the post-translational modification N6-acetyllysine. At serine 253 the chain carries Phosphoserine. Residues 264 to 281 (MNSRKPDLRVVIPPSSKG) form a required for interaction with MAPKs region. Phosphothreonine; by MAPK7 and MAPK14 occurs at positions 302 and 309. Residue serine 345 is modified to Phosphoserine; by MAPK7. Positions 380–392 (SNLSINTNQNINI) are enriched in polar residues. Positions 380-494 (SNLSINTNQN…KRMRMDAWVT (115 aa)) are disordered. Lysine 393 carries the post-translational modification N6-acetyllysine; alternate. Residue lysine 393 forms a Glycyl lysine isopeptide (Lys-Gly) (interchain with G-Cter in SUMO); alternate linkage. Position 398 is a phosphoserine; by CDK5 (serine 398). Threonine 405 is subject to Phosphothreonine. A compositionally biased stretch (pro residues) spans 418–432 (QPPPPPPQPQPPQPQ). Position 440 is a phosphoserine (serine 440). Residues 440-453 (SPVDSLSSSSSSYD) are compositionally biased toward low complexity. Basic and acidic residues-rich tracts occupy residues 454-464 (GSDREDPRGDF) and 475-494 (NTED…AWVT).

In terms of assembly, binds DNA as a homo- or heterodimer. Dimerizes with MEF2D. Interacts with HDAC7. Interacts with PIAS1; the interaction enhances sumoylation. Interacts with HDAC4, HDAC9 and SLC2A4RG. Interacts (via the N-terminal) with MAPK7; the interaction results in the phosphorylation and transcriptional activity of MEF2A. Constitutive phosphorylation on Ser-398 promotes Lys-393 sumoylation thus preventing acetylation at this site. Dephosphorylation on Ser-398 by PPP3CA upon neuron depolarization promotes a switch from sumoylation to acetylation on residue Lys-393 leading to inhibition of dendrite claw differentiation. Phosphorylation on Thr-302 and Thr-309 are the main sites involved in p38 MAPK signaling and activate transcription. Phosphorylated on these sites by MAPK14/p38alpha and MAPK11/p38beta, but not by MAPK13/p38delta nor by MAPK12/p38gamma. Phosphorylation on Ser-398 by CDK5 induced by neurotoxicity inhibits MEF2A transcriptional activation leading to apoptosis of cortical neurons. Phosphorylation on Thr-302, Thr-309 and Ser-345 can be induced by EGF. Post-translationally, sumoylation on Lys-393 is enhanced by PIAS1 and represses transcriptional activity. Phosphorylation on Ser-398 is required for sumoylation. Has no effect on nuclear location nor on DNA binding. Sumoylated with SUMO1 and, to a lesser extent with SUMO2 and SUMO3. PIASx facilitates sumoylation in postsynaptic dendrites in the cerebellar cortex and promotes their morphogenesis. In terms of processing, acetylation on Lys-393 activates transcriptional activity. Acetylated by p300 on several sites in diffentiating myocytes. Acetylation on Lys-4 increases DNA binding and transactivation. Hyperacetylation by p300 leads to enhanced cardiac myocyte growth and heart failure. Proteolytically cleaved in cerebellar granule neurons on several sites by caspase 3 and caspase 7 following neurotoxicity. Preferentially cleaves the CDK5-mediated hyperphosphorylated form which leads to neuron apoptosis and transcriptional inactivation.

The protein resides in the nucleus. Functionally, transcriptional activator which binds specifically to the MEF2 element, 5'-YTA[AT](4)TAR-3', found in numerous muscle-specific genes. Also involved in the activation of numerous growth factor- and stress-induced genes. Mediates cellular functions not only in skeletal and cardiac muscle development, but also in neuronal differentiation and survival. Plays diverse roles in the control of cell growth, survival and apoptosis via p38 MAPK signaling in muscle-specific and/or growth factor-related transcription. In cerebellar granule neurons, phosphorylated and sumoylated MEF2A represses transcription of NUR77 promoting synaptic differentiation. Associates with chromatin to the ZNF16 promoter. This chain is Myocyte-specific enhancer factor 2A (MEF2A), found in Pongo abelii (Sumatran orangutan).